Reading from the N-terminus, the 1369-residue chain is Xanthine dehydrogenase (1369 aa).

A 2Fe-2S ferredoxin-type domain is found at 20–106 (GEAVVYVNGV…GMHIITVEGI (87 aa)). [2Fe-2S] cluster is bound by residues cysteine 58, cysteine 63, cysteine 66, cysteine 88, cysteine 128, cysteine 131, cysteine 164, and cysteine 166. Residues 265 to 450 (NGFNGIRWYR…LSVILPWTRP (186 aa)) enclose the FAD-binding PCMH-type domain. FAD is bound by residues 293–300 (LIIGNSEV), phenylalanine 373, 383–387 (SVGGN), aspartate 396, leucine 440, and lysine 458. Glutamine 804 and phenylalanine 835 together coordinate Mo-molybdopterin. Substrate-binding residues include glutamate 839 and arginine 917. Arginine 949 serves as a coordination point for Mo-molybdopterin. Residues phenylalanine 951 and threonine 1047 each coordinate substrate. Alanine 1116 contributes to the Mo-molybdopterin binding site. The active-site Proton acceptor is glutamate 1305.

It belongs to the xanthine dehydrogenase family. As to quaternary structure, homodimer. It depends on [2Fe-2S] cluster as a cofactor. The cofactor is FAD. Mo-molybdopterin is required as a cofactor.

The enzyme catalyses xanthine + NAD(+) + H2O = urate + NADH + H(+). It carries out the reaction hypoxanthine + NAD(+) + H2O = xanthine + NADH + H(+). Key enzyme involved in purine catabolism. Catalyzes the oxidation of hypoxanthine to xanthine and the oxidation of xanthine to urate. In Oryza sativa subsp. japonica (Rice), this protein is Xanthine dehydrogenase (XDH).